The primary structure comprises 198 residues: Recombination protein RecR (198 aa).

Residues 57-72 form a C4-type zinc finger; that stretch reads CSICGNLTDQDPCAIC. One can recognise a Toprim domain in the interval 80-175; that stretch reads STILIVEDSR…KVTRLARGLA (96 aa).

It belongs to the RecR family.

In terms of biological role, may play a role in DNA repair. It seems to be involved in an RecBC-independent recombinational process of DNA repair. It may act with RecF and RecO. The protein is Recombination protein RecR of Streptococcus suis (strain 05ZYH33).